The following is a 241-amino-acid chain: MSKVDVAVTIAPKEEITDQLKKDLIREQKSIDIIELRIDQRESFEIADLERLFKTLKDLQLDVQVLVTYRTSVQGGKGQKNGNTYYEFLQDLIQIQGYDMVDIEWDEAQTEILLQLIVQAQSAGLKVVLSQHDFDKTPNLEVLKFLYFKMNKLGADIVKLAVMPNEKQDVLNLLEALATASESIEAKPVGISMSHLGLISRTAQGVFGGIISYGCLGTPQAPGQIHVGQLKELLNIYEINK.

3-dehydroquinate is bound by residues 35–37 (ELR) and R70. H132 functions as the Proton donor/acceptor in the catalytic mechanism. Catalysis depends on K159, which acts as the Schiff-base intermediate with substrate. Positions 201 and 224 each coordinate 3-dehydroquinate.

The protein belongs to the type-I 3-dehydroquinase family. Homodimer.

It catalyses the reaction 3-dehydroquinate = 3-dehydroshikimate + H2O. It functions in the pathway metabolic intermediate biosynthesis; chorismate biosynthesis; chorismate from D-erythrose 4-phosphate and phosphoenolpyruvate: step 3/7. Functionally, involved in the third step of the chorismate pathway, which leads to the biosynthesis of aromatic amino acids. Catalyzes the cis-dehydration of 3-dehydroquinate (DHQ) and introduces the first double bond of the aromatic ring to yield 3-dehydroshikimate. This is 3-dehydroquinate dehydratase from Staphylococcus carnosus (strain TM300).